Consider the following 239-residue polypeptide: Tungstate uptake system permease protein TupB (239 aa).

Residues 37 to 233 (IKTTLLSSSI…LIAFCLNFIT (197 aa)) form the ABC transmembrane type-1 domain. 5 helical membrane passes run 45 to 65 (SISIVLALLIGFPLGFILGFF), 76 to 96 (IVDTSLSFPTVAVGLILYALI), 114 to 134 (LILGQFILALPIVIALFSNLI), 168 to 188 (ISVVALAYGRIVAEVGVAMIV), and 212 to 232 (FASGIALALVLILIAFCLNFI).

It belongs to the binding-protein-dependent transport system permease family. In terms of assembly, the complex is composed of two ATP-binding proteins (TupC), two transmembrane proteins (TupB) and a solute-binding protein (TupA).

The protein resides in the cell inner membrane. Its function is as follows. Part of an ABC transporter complex involved in ultra-high affinity tungstate uptake. Probably responsible for the translocation of the substrate across the membrane. This is Tungstate uptake system permease protein TupB from Campylobacter jejuni subsp. jejuni serotype O:2 (strain ATCC 700819 / NCTC 11168).